The following is a 183-amino-acid chain: Streptavidin-V2 (183 aa).

An N-terminal signal peptide occupies residues 1–24 (MRKIVVAAIAVSLTTVGITASASA). The 123-residue stretch at 37 to 159 (AEAGITGTWY…GHDTFTKVKP (123 aa)) folds into the Avidin-like domain. 2 residues coordinate biotin: Y67 and Y78. The Cell attachment site; atypical motif lies at 83-85 (RYD). Residues W116, W132, and W144 each contribute to the biotin site.

The protein belongs to the avidin/streptavidin family. As to quaternary structure, homotetramer.

The protein localises to the secreted. Functionally, the biological function of streptavidin is not known. Forms a strong non-covalent specific complex with biotin (one molecule of biotin per subunit of streptavidin). In Streptomyces violaceus (Streptomyces venezuelae), this protein is Streptavidin-V2.